Reading from the N-terminus, the 305-residue chain is tRNA dimethylallyltransferase (305 aa).

An ATP-binding site is contributed by 8 to 15 (GPTAVGKT). 10 to 15 (TAVGKT) lines the substrate pocket. An interaction with substrate tRNA region spans residues 33–36 (DSRQ).

Belongs to the IPP transferase family. In terms of assembly, monomer. Requires Mg(2+) as cofactor.

It catalyses the reaction adenosine(37) in tRNA + dimethylallyl diphosphate = N(6)-dimethylallyladenosine(37) in tRNA + diphosphate. Its function is as follows. Catalyzes the transfer of a dimethylallyl group onto the adenine at position 37 in tRNAs that read codons beginning with uridine, leading to the formation of N6-(dimethylallyl)adenosine (i(6)A). In Thermotoga sp. (strain RQ2), this protein is tRNA dimethylallyltransferase.